The sequence spans 152 residues: Large ribosomal subunit protein uL15 (152 aa).

A disordered region spans residues 1-56; the sequence is MELNTLKPAKNSVKQNTRYGRGQGSGKGGTSTRGHKGAKSRSGYKSKPGFEGGQLP. Positions 21 to 31 are enriched in gly residues; it reads RGQGSGKGGTS. Basic residues predominate over residues 33–44; it reads RGHKGAKSRSGY.

Belongs to the universal ribosomal protein uL15 family. Part of the 50S ribosomal subunit.

Binds to the 23S rRNA. The polypeptide is Large ribosomal subunit protein uL15 (Amoebophilus asiaticus (strain 5a2)).